We begin with the raw amino-acid sequence, 227 residues long: Enolase-phosphatase E1 (227 aa).

It belongs to the HAD-like hydrolase superfamily. MasA/MtnC family. In terms of assembly, monomer. It depends on Mg(2+) as a cofactor.

The catalysed reaction is 5-methylsulfanyl-2,3-dioxopentyl phosphate + H2O = 1,2-dihydroxy-5-(methylsulfanyl)pent-1-en-3-one + phosphate. It participates in amino-acid biosynthesis; L-methionine biosynthesis via salvage pathway; L-methionine from S-methyl-5-thio-alpha-D-ribose 1-phosphate: step 3/6. Its pathway is amino-acid biosynthesis; L-methionine biosynthesis via salvage pathway; L-methionine from S-methyl-5-thio-alpha-D-ribose 1-phosphate: step 4/6. Bifunctional enzyme that catalyzes the enolization of 2,3-diketo-5-methylthiopentyl-1-phosphate (DK-MTP-1-P) into the intermediate 2-hydroxy-3-keto-5-methylthiopentenyl-1-phosphate (HK-MTPenyl-1-P), which is then dephosphorylated to form the acireductone 1,2-dihydroxy-3-keto-5-methylthiopentene (DHK-MTPene). This is Enolase-phosphatase E1 from Pseudomonas syringae pv. syringae (strain B728a).